We begin with the raw amino-acid sequence, 137 residues long: Small ribosomal subunit protein uS12 (137 aa).

Position 89 is a 3-methylthioaspartic acid (aspartate 89). Residues 101–137 (SLDTSGVADRKQSRSKYGAKQPKAGAPAAPVKGKGKK) are disordered. Over residues 116 to 137 (KYGAKQPKAGAPAAPVKGKGKK) the composition is skewed to low complexity.

This sequence belongs to the universal ribosomal protein uS12 family. As to quaternary structure, part of the 30S ribosomal subunit. Contacts proteins S8 and S17. May interact with IF1 in the 30S initiation complex.

Its function is as follows. With S4 and S5 plays an important role in translational accuracy. Functionally, interacts with and stabilizes bases of the 16S rRNA that are involved in tRNA selection in the A site and with the mRNA backbone. Located at the interface of the 30S and 50S subunits, it traverses the body of the 30S subunit contacting proteins on the other side and probably holding the rRNA structure together. The combined cluster of proteins S8, S12 and S17 appears to hold together the shoulder and platform of the 30S subunit. The sequence is that of Small ribosomal subunit protein uS12 from Chlorobium chlorochromatii (strain CaD3).